A 483-amino-acid chain; its full sequence is UDP-N-acetylmuramoyl-L-alanyl-D-glutamate--2,6-diaminopimelate ligase (483 aa).

A UDP-N-acetyl-alpha-D-muramoyl-L-alanyl-D-glutamate-binding site is contributed by Ser-30. 109 to 115 lines the ATP pocket; sequence GTNGKTT. Residues 151–152, Ser-178, and Arg-186 each bind UDP-N-acetyl-alpha-D-muramoyl-L-alanyl-D-glutamate; that span reads TT. Residue Lys-218 is modified to N6-carboxylysine. Meso-2,6-diaminopimelate contacts are provided by residues Arg-380, 403-406, Gly-453, and Glu-457; that span reads DNPR. The Meso-diaminopimelate recognition motif motif lies at 403-406; sequence DNPR.

Belongs to the MurCDEF family. MurE subfamily. Mg(2+) serves as cofactor. In terms of processing, carboxylation is probably crucial for Mg(2+) binding and, consequently, for the gamma-phosphate positioning of ATP.

It is found in the cytoplasm. It carries out the reaction UDP-N-acetyl-alpha-D-muramoyl-L-alanyl-D-glutamate + meso-2,6-diaminopimelate + ATP = UDP-N-acetyl-alpha-D-muramoyl-L-alanyl-gamma-D-glutamyl-meso-2,6-diaminopimelate + ADP + phosphate + H(+). The protein operates within cell wall biogenesis; peptidoglycan biosynthesis. Its function is as follows. Catalyzes the addition of meso-diaminopimelic acid to the nucleotide precursor UDP-N-acetylmuramoyl-L-alanyl-D-glutamate (UMAG) in the biosynthesis of bacterial cell-wall peptidoglycan. The polypeptide is UDP-N-acetylmuramoyl-L-alanyl-D-glutamate--2,6-diaminopimelate ligase (Chlamydia caviae (strain ATCC VR-813 / DSM 19441 / 03DC25 / GPIC) (Chlamydophila caviae)).